The primary structure comprises 99 residues: Small ribosomal subunit protein uS17 (99 aa).

This sequence belongs to the universal ribosomal protein uS17 family. As to quaternary structure, part of the 30S ribosomal subunit.

One of the primary rRNA binding proteins, it binds specifically to the 5'-end of 16S ribosomal RNA. The polypeptide is Small ribosomal subunit protein uS17 (Thermosipho melanesiensis (strain DSM 12029 / CIP 104789 / BI429)).